A 505-amino-acid polypeptide reads, in one-letter code: Megakaryocyte-associated tyrosine-protein kinase (505 aa).

Residues 46–108 (APGTQCMTKC…AAAALRHGEA (63 aa)) enclose the SH3 domain. An SH2 domain is found at 120 to 209 (WFHGKISGQE…AICTKLVKPR (90 aa)). Residues 233–481 (LTLGAQIGEG…IVEKLGRELR (249 aa)) form the Protein kinase domain. Residues 239-247 (IGEGEFGAV) and Lys-260 contribute to the ATP site. The Proton acceptor role is filled by Asp-350. The segment at 483-505 (VGVSAPAGGQEAEGSAPTRSQDP) is disordered.

Belongs to the protein kinase superfamily. Tyr protein kinase family. CSK subfamily. In terms of assembly, interacts with KIT. In terms of tissue distribution, most abundant in brain, and to a lesser extent in the spleen, the thymus and the liver. Also found in the T-cell lineage.

The protein localises to the cytoplasm. Its subcellular location is the membrane. It catalyses the reaction L-tyrosyl-[protein] + ATP = O-phospho-L-tyrosyl-[protein] + ADP + H(+). In terms of biological role, could play a significant role in the signal transduction of hematopoietic cells. May regulate tyrosine kinase activity of SRC-family members in brain by specifically phosphorylating their C-terminal regulatory tyrosine residue which acts as a negative regulatory site. It may play an inhibitory role in the control of T-cell proliferation. The protein is Megakaryocyte-associated tyrosine-protein kinase (Matk) of Mus musculus (Mouse).